Reading from the N-terminus, the 600-residue chain is NADH-quinone oxidoreductase subunit C/D (600 aa).

The segment at 1-190 (MVNNMTDLTA…SPFELTKAKQ (190 aa)) is NADH dehydrogenase I subunit C. Residues 214–600 (DFMFLNLGPN…IDFVMSDVDR (387 aa)) form an NADH dehydrogenase I subunit D region.

This sequence in the N-terminal section; belongs to the complex I 30 kDa subunit family. It in the C-terminal section; belongs to the complex I 49 kDa subunit family. As to quaternary structure, NDH-1 is composed of 13 different subunits. Subunits NuoB, CD, E, F, and G constitute the peripheral sector of the complex.

It is found in the cell inner membrane. The enzyme catalyses a quinone + NADH + 5 H(+)(in) = a quinol + NAD(+) + 4 H(+)(out). Functionally, NDH-1 shuttles electrons from NADH, via FMN and iron-sulfur (Fe-S) centers, to quinones in the respiratory chain. The immediate electron acceptor for the enzyme in this species is believed to be ubiquinone. Couples the redox reaction to proton translocation (for every two electrons transferred, four hydrogen ions are translocated across the cytoplasmic membrane), and thus conserves the redox energy in a proton gradient. The chain is NADH-quinone oxidoreductase subunit C/D from Shigella boydii serotype 18 (strain CDC 3083-94 / BS512).